We begin with the raw amino-acid sequence, 858 residues long: Leucine--tRNA ligase (858 aa).

Positions 42 to 52 (PYPSGRLHMGH) match the 'HIGH' region motif. The 'KMSKS' region signature appears at 618–622 (KMSKS). Lys-621 contributes to the ATP binding site.

It belongs to the class-I aminoacyl-tRNA synthetase family.

Its subcellular location is the cytoplasm. The catalysed reaction is tRNA(Leu) + L-leucine + ATP = L-leucyl-tRNA(Leu) + AMP + diphosphate. This is Leucine--tRNA ligase from Photobacterium profundum (strain SS9).